The chain runs to 702 residues: Polyribonucleotide nucleotidyltransferase (702 aa).

The Mg(2+) site is built by Asp485 and Asp491. Residues 552-612 enclose the KH domain; that stretch reads PRTEIICIDP…EGVKKAISII (61 aa). An S1 motif domain is found at 622 to 690; it reads GEIYLGKVTK…NQGRINLSRK (69 aa).

The protein belongs to the polyribonucleotide nucleotidyltransferase family. Requires Mg(2+) as cofactor.

It is found in the cytoplasm. The catalysed reaction is RNA(n+1) + phosphate = RNA(n) + a ribonucleoside 5'-diphosphate. Involved in mRNA degradation. Catalyzes the phosphorolysis of single-stranded polyribonucleotides processively in the 3'- to 5'-direction. In Clostridium botulinum (strain ATCC 19397 / Type A), this protein is Polyribonucleotide nucleotidyltransferase.